The primary structure comprises 153 residues: Protein ElaA (153 aa).

An N-acetyltransferase domain is found at 7–151 (LHHSELSVSQ…PHIGMAREVI (145 aa)).

This sequence belongs to the UPF0039 (ElaA) family.

This Escherichia coli (strain K12) protein is Protein ElaA (elaA).